The following is a 323-amino-acid chain: Caspase-1 (323 aa).

The propeptide occupies 1–33 (MTDECVTRNYGVGIRSPNGSENRGSFIMADNTD). Residues His-154 and Cys-196 contribute to the active site. Positions 203-215 (GGITLEKGVTETD) are excised as a propeptide.

It belongs to the peptidase C14A family. As to quaternary structure, heterotetramer that consists of two anti-parallel arranged heterodimers, each one formed by a 22 kDa (p22) and a 13 kDa (p13) subunit.

In terms of biological role, involved in the activation cascade of caspases responsible for apoptosis execution. Proteolytically cleaves poly(ADP-ribose) polymerase (PARP). Loss of zygotic DCP-1 function causes larval lethality and melanotic tumors. In Drosophila melanogaster (Fruit fly), this protein is Caspase-1 (Dcp-1).